A 252-amino-acid chain; its full sequence is Probable transcriptional regulatory protein Moth_1704 (252 aa).

It belongs to the TACO1 family.

It localises to the cytoplasm. This is Probable transcriptional regulatory protein Moth_1704 from Moorella thermoacetica (strain ATCC 39073 / JCM 9320).